Here is a 548-residue protein sequence, read N- to C-terminus: MEEDLFQLRQLPVVKFRRTGESARSEDDAASGEHDVQIEGVRVGLEAVELDDGAAVPKEFANPTDDTFMVEDAVEAIGFGRFQWKLSVLTGLAWMADAMEMMILSILAPQLHCEWRLPSWQVALLTSVVFIGMMSSSTLWGNISDQYGRKTGLKISVFWTLYYGILSAFAPVYSWILVLRGLVGFGIGGVPQSVTLYAEFLPMKARAKCILLIEVFWAIGTVFEVLLAVFVMPSLGWRWLLLLSAAPLLVFAVLCFWLPESARYDVLSGNQEKAIATLKRIATENGAPMPLGKLIISRQEDRGKMRDLFTPHFRWTTLLLWFIWFSNAFSYYGLVLLTTELFQAGDVCSISSRKKAVEAKCSLACEYLSKEDYMDLLWTTLSEFPGVLVTLWVIDRLGRKKTMALCFVIFSLCSLLLFICIGRNVLTLLLFIARAFISGGFQAAYVYTPEVYPTATRALGLGTCSGMARVGALITPFIAQVMLESSVYLTLAVYSGCCLLAALASCFLPIETKGRALQESSHREWGQEMVGRGTNSTGVPRSNSGSQE.

Residues 1–87 (MEEDLFQLRQ…GFGRFQWKLS (87 aa)) lie on the Cytoplasmic side of the membrane. Serine 25 and serine 31 each carry phosphoserine. The chain crosses the membrane as a helical span at residues 88 to 108 (VLTGLAWMADAMEMMILSILA). Over 109–122 (PQLHCEWRLPSWQV) the chain is Vesicular. A helical transmembrane segment spans residues 123-143 (ALLTSVVFIGMMSSSTLWGNI). Topologically, residues 144–156 (SDQYGRKTGLKIS) are cytoplasmic. A helical transmembrane segment spans residues 157-177 (VFWTLYYGILSAFAPVYSWIL). Residues 178-180 (VLR) lie on the Vesicular side of the membrane. The chain crosses the membrane as a helical span at residues 181–201 (GLVGFGIGGVPQSVTLYAEFL). The Cytoplasmic portion of the chain corresponds to 202-209 (PMKARAKC). A helical membrane pass occupies residues 210 to 230 (ILLIEVFWAIGTVFEVLLAVF). The Vesicular portion of the chain corresponds to 231-238 (VMPSLGWR). Residues 239-259 (WLLLLSAAPLLVFAVLCFWLP) form a helical membrane-spanning segment. At 260 to 316 (ESARYDVLSGNQEKAIATLKRIATENGAPMPLGKLIISRQEDRGKMRDLFTPHFRWT) the chain is on the cytoplasmic side. Residues 317-337 (TLLLWFIWFSNAFSYYGLVLL) traverse the membrane as a helical segment. The Vesicular segment spans residues 338 to 373 (TTELFQAGDVCSISSRKKAVEAKCSLACEYLSKEDY). The helical transmembrane segment at 374 to 394 (MDLLWTTLSEFPGVLVTLWVI) threads the bilayer. The Cytoplasmic portion of the chain corresponds to 395–401 (DRLGRKK). A helical membrane pass occupies residues 402–422 (TMALCFVIFSLCSLLLFICIG). The Vesicular portion of the chain corresponds to 423-424 (RN). The chain crosses the membrane as a helical span at residues 425–445 (VLTLLLFIARAFISGGFQAAY). The Cytoplasmic portion of the chain corresponds to 446 to 457 (VYTPEVYPTATR). The chain crosses the membrane as a helical span at residues 458-478 (ALGLGTCSGMARVGALITPFI). Residues 479 to 489 (AQVMLESSVYL) are Vesicular-facing. A helical transmembrane segment spans residues 490–510 (TLAVYSGCCLLAALASCFLPI). Over 511 to 548 (ETKGRALQESSHREWGQEMVGRGTNSTGVPRSNSGSQE) the chain is Cytoplasmic. The disordered stretch occupies residues 523 to 548 (REWGQEMVGRGTNSTGVPRSNSGSQE). The segment covering 533 to 548 (GTNSTGVPRSNSGSQE) has biased composition (polar residues). Residue serine 542 is modified to Phosphoserine.

It belongs to the major facilitator superfamily. In terms of tissue distribution, detected in brain (at protein level). Detected in brain, in synaptic layers of the cerebellum, hippocampus and cerebral cortex.

The protein localises to the cytoplasmic vesicle. It localises to the secretory vesicle. Its subcellular location is the synaptic vesicle membrane. This chain is Synaptic vesicle 2-related protein (Svop), found in Rattus norvegicus (Rat).